The sequence spans 288 residues: Urease accessory protein UreD (288 aa).

This sequence belongs to the UreD family. UreD, UreF and UreG form a complex that acts as a GTP-hydrolysis-dependent molecular chaperone, activating the urease apoprotein by helping to assemble the nickel containing metallocenter of UreC. The UreE protein probably delivers the nickel.

It localises to the cytoplasm. In terms of biological role, required for maturation of urease via the functional incorporation of the urease nickel metallocenter. This chain is Urease accessory protein UreD, found in Dechloromonas aromatica (strain RCB).